Here is a 602-residue protein sequence, read N- to C-terminus: Adenylosuccinate synthetase (602 aa).

Residues 74 to 80 (GDEGKGK) and 104 to 106 (GHT) contribute to the GTP site. Asp75 functions as the Proton acceptor in the catalytic mechanism. Mg(2+)-binding residues include Asp75 and Gly104. Residues 75 to 78 (DEGK), 102 to 105 (NAGH), Thr189, Lys203, Gln315, Thr331, and Lys459 each bind IMP. The active-site Proton donor is His105. Residue 455 to 461 (AVTKKPR) coordinates substrate. Residues Arg461 and 589-591 (GNG) contribute to the GTP site.

Belongs to the adenylosuccinate synthetase family. In terms of assembly, homodimer. Mg(2+) serves as cofactor.

The protein localises to the cytoplasm. It catalyses the reaction IMP + L-aspartate + GTP = N(6)-(1,2-dicarboxyethyl)-AMP + GDP + phosphate + 2 H(+). Its pathway is purine metabolism; AMP biosynthesis via de novo pathway; AMP from IMP: step 1/2. Functionally, plays an important role in the salvage pathway for purine nucleotide biosynthesis. Catalyzes the first committed step in the biosynthesis of AMP from IMP. This Trypanosoma brucei gambiense (strain MHOM/CI/86/DAL972) protein is Adenylosuccinate synthetase.